Here is a 318-residue protein sequence, read N- to C-terminus: Magnetosome protein MamM (318 aa).

Positions 1–210 are transmembrane domain (TMD); the sequence is MRKSGCAVCS…FMDAYRGLMD (210 aa). Transmembrane regions (helical) follow at residues 13-33, 39-59, 81-101, and 117-137; these read IGWV…FVGL, AMLA…MVII, FILS…LLVH, and LIVL…YFYS. A C-terminal domain (CTD) region spans residues 211-318; it reads HTAGEAVQNR…DEVMLSKVDN (108 aa). Residues Asp-249, His-264, His-285, and Glu-289 each contribute to the Fe cation site.

Belongs to the cation diffusion facilitator (CDF) transporter (TC 2.A.4) family. Forms homodimers via its C-terminal domain (CTD) in the presence of metal cations. Interacts with MamB via their CTD. Isolated CTD forms homodimers.

The protein localises to the magnetosome membrane. The protein resides in the cell inner membrane. Functionally, essential for magnetosome formation; required for stable accumulation of MamB. May nucleate iron crystal formation. Probably binds and transports iron. Binds divalent cations, possibly up to 3 Zn(2+) per dimer in vitro, probably iron in vivo. One of 7 genes (mamLQBIEMO) able to induce magnetosome membrane biogenesis; coexpression of mamLQRBIEMO in a deletion of the 17 gene mamAB operon restores magnetosome vesicle formation but not magnetite biosynthesis. The sequence is that of Magnetosome protein MamM from Magnetospirillum gryphiswaldense (strain DSM 6361 / JCM 21280 / NBRC 15271 / MSR-1).